Here is a 112-residue protein sequence, read N- to C-terminus: Mu-ctenitoxin-Pn1a (112 aa).

A signal peptide spans 1-19 (MKLLGIFLVASFAFVLSFG). Residues 20–33 (EEMIEGENPLEDQR) constitute a propeptide that is removed on maturation. Intrachain disulfides connect cysteine 39/cysteine 56, cysteine 46/cysteine 62, cysteine 53/cysteine 85, cysteine 55/cysteine 73, cysteine 64/cysteine 71, cysteine 91/cysteine 106, and cysteine 102/cysteine 110. Glycine 111 is subject to Glycine amide.

It belongs to the neurotoxin 04 (omega-agtx) family. 02 (Tx1) subfamily. Contains 7 disulfide bonds. In terms of tissue distribution, expressed by the venom gland.

It localises to the secreted. Functionally, reversible inhibitor of neuronal sodium channels (Nav1.2/ SCN2A) that binds in proximity to site 1 and displays increasing affinity as the membrane potential is depolarized. Induces excitatory symptoms and spastic paralysis in mice. The protein is Mu-ctenitoxin-Pn1a of Phoneutria nigriventer (Brazilian armed spider).